The following is a 451-amino-acid chain: MLDPILLRKDLQTVVDRLKSRGVDFDIARFNELESRRKAVQTETESQQARRNALAKQIGQLKGKGAPEAEVQAVMAESQALPARLKALEDELAQTQAQLNDLLMSVPNLPHASVPQGASSDENVEVRRWLPGAADERGIPAALGFEVRDHVAVGEPLGLDFDLAARLSGARFSFMRGQMARLHRALAQFMLDLQTGTHGYTECYTPYIVNSSTLFGTGQLPKFKDDMFFVTKGGGDDEPKVDEQGNPLAREDQYLISTSEITLTSVVRETIVAGADLPLRLTAHTPCFRSEAGSGGRDTRGMIRQHQFDKVEMVQIAHPEHSYEALEEMVGHAERVLQLLELPYRVMLLCTGDMGFGSAKTYDLEVWLPAQDTWREISSVSNCETFQARRMQARFRNAQNKPEYVHTLNGSGLAVGRALVAVLENCQQADGSVRVPAVLQPYMGGLTVLEP.

258–260 (TSE) contacts L-serine. 289–291 (RSE) provides a ligand contact to ATP. Residue glutamate 312 participates in L-serine binding. 376–379 (EISS) provides a ligand contact to ATP. Position 411 (serine 411) interacts with L-serine.

This sequence belongs to the class-II aminoacyl-tRNA synthetase family. Type-1 seryl-tRNA synthetase subfamily. In terms of assembly, homodimer. The tRNA molecule binds across the dimer.

Its subcellular location is the cytoplasm. The catalysed reaction is tRNA(Ser) + L-serine + ATP = L-seryl-tRNA(Ser) + AMP + diphosphate + H(+). It catalyses the reaction tRNA(Sec) + L-serine + ATP = L-seryl-tRNA(Sec) + AMP + diphosphate + H(+). It functions in the pathway aminoacyl-tRNA biosynthesis; selenocysteinyl-tRNA(Sec) biosynthesis; L-seryl-tRNA(Sec) from L-serine and tRNA(Sec): step 1/1. Its function is as follows. Catalyzes the attachment of serine to tRNA(Ser). Is also able to aminoacylate tRNA(Sec) with serine, to form the misacylated tRNA L-seryl-tRNA(Sec), which will be further converted into selenocysteinyl-tRNA(Sec). In Bordetella pertussis (strain Tohama I / ATCC BAA-589 / NCTC 13251), this protein is Serine--tRNA ligase.